The following is a 578-amino-acid chain: E3 ubiquitin-protein ligase hrd-like protein 1 (578 aa).

A helical membrane pass occupies residues 32-52 (GYLALSLCVAFIASASVFTHF). Asparagine 68 carries N-linked (GlcNAc...) asparagine glycosylation. 7 consecutive transmembrane segments (helical) span residues 76-96 (FGIN…HYIL), 101-121 (LIWV…KLII), 134-154 (VAAR…LSVV), 163-183 (VMPW…QFVT), 202-222 (SFIS…VSRF), 230-250 (PAVL…YILF), and 286-306 (FLSY…SIFF). The RING-type; atypical zinc-finger motif lies at 350–388 (CIVCWELLGTSRRLPCSHQFHDWCLMWWLAQDSSCPTCR). Positions 447 to 489 (QLQSMLETVLEMFPQMSPETILADLRQSGSAQSTIENILEGRM) constitute a CUE domain. Asparagine 492 carries N-linked (GlcNAc...) asparagine glycosylation.

It localises to the membrane. Functionally, proposed to have a role in neuroprotection. This chain is E3 ubiquitin-protein ligase hrd-like protein 1, found in Caenorhabditis briggsae.